The primary structure comprises 6359 residues: Bacitracin synthase 3 (6359 aa).

Residues 461-1034 (LHELFEEQAM…IKGLGEYIRS (574 aa)) form a domain 1 (isoleucine-activating) region. Basic and acidic residues predominate over residues 941-953 (VDRKALPEPDRTA). Residues 941–962 (VDRKALPEPDRTAGAENEYEAP) are disordered. Carrier domains follow at residues 961-1036 (APRN…RSTK), 1993-2067 (APRN…KKQS), 3497-3572 (APRN…ESMK), 4539-4613 (PPRN…KAES), and 6047-6122 (PPRH…KHAQ). Residues serine 996, serine 2028, and serine 3532 each carry the O-(pantetheine 4'-phosphoryl)serine modification. A domain 2 (D-phenylalanine-activating) region spans residues 1517 to 2064 (FEDQTLTYRQ…RIKDLAKYVK (548 aa)). Positions 2999-3570 (NKTIHQLFEE…IKDIGDFIES (572 aa)) are domain 3 (histidine-activating). Residues 4047 to 4612 (EQTAVVYADE…KSLSRYVKAE (566 aa)) are domain 4 (D-aspartic acid-activating). The tract at residues 4521–4544 (IDTAALPEPQPGKETEYEPPRNET) is disordered. Residues 4531–4544 (PGKETEYEPPRNET) are compositionally biased toward basic and acidic residues. An O-(pantetheine 4'-phosphoryl)serine mark is found at serine 4574 and serine 6082. Positions 5549–6129 (IHRLFEEQAE…HAQDLLKDYT (581 aa)) are domain 5 (asparagine-activating).

This sequence belongs to the ATP-dependent AMP-binding enzyme family. Large multienzyme complex of BA1, BA2 and BA3. Pantetheine 4'-phosphate serves as cofactor.

The enzyme catalyses L-aspartate = D-aspartate. It carries out the reaction L-phenylalanine + ATP + H2O = D-phenylalanine + AMP + diphosphate + H(+). It functions in the pathway antibiotic biosynthesis; bacitracin biosynthesis. Induces peptide synthesis, activates and incorporates five amino acids, forms a thiazoline ring between the first two amino acids and incorporates a D-glutamine in the fourth position. The chain is Bacitracin synthase 3 (bacC) from Bacillus licheniformis.